Consider the following 367-residue polypeptide: Peptide chain release factor 2 (367 aa).

The residue at position 249 (glutamine 249) is an N5-methylglutamine.

It belongs to the prokaryotic/mitochondrial release factor family. Methylated by PrmC. Methylation increases the termination efficiency of RF2.

It localises to the cytoplasm. Peptide chain release factor 2 directs the termination of translation in response to the peptide chain termination codons UGA and UAA. This chain is Peptide chain release factor 2, found in Thermotoga sp. (strain RQ2).